Consider the following 460-residue polypeptide: Cyclic 2,3-diphosphoglycerate synthetase (460 aa).

Homodimer.

The protein localises to the cytoplasm. It carries out the reaction (2R)-2,3-bisphosphoglycerate + ATP + H(+) = cyclic (2R)-2,3-bisphosphoglycerate + ADP + phosphate. Its function is as follows. Catalyzes the formation of cyclic 2,3-diphosphoglycerate (cDPG) by formation of an intramolecular phosphoanhydride bond at the expense of ATP. It is also able to catalyze the hydrolysis of cDPG but with significant slower rates (8-10 times). May be involved in thermoadaptation. This Methanothermus fervidus (strain ATCC 43054 / DSM 2088 / JCM 10308 / V24 S) protein is Cyclic 2,3-diphosphoglycerate synthetase (cpgS).